Consider the following 281-residue polypeptide: Urease accessory protein UreD 2 (281 aa).

This sequence belongs to the UreD family. UreD, UreF and UreG form a complex that acts as a GTP-hydrolysis-dependent molecular chaperone, activating the urease apoprotein by helping to assemble the nickel containing metallocenter of UreC. The UreE protein probably delivers the nickel.

It is found in the cytoplasm. Functionally, required for maturation of urease via the functional incorporation of the urease nickel metallocenter. The sequence is that of Urease accessory protein UreD 2 from Pseudomonas syringae pv. syringae (strain B728a).